Reading from the N-terminus, the 199-residue chain is Guanylyl cyclase-activating protein 1 (199 aa).

Gly2 carries N-myristoyl glycine lipidation. The residue at position 3 (Asn3) is a Deamidated asparagine. EF-hand domains are found at residues 13-48 (SATE…KNLS), 50-85 (SANK…VLKG), 86-121 (KVDQ…IRAI), and 129-164 (TAEE…DEVL). Residues Asp63, Asn65, Asp67, Tyr69, Glu74, Asp99, Asp101, Asn103, Cys105, Glu110, Asp142, Asn144, Asp146, Glu148, and Glu153 each coordinate Ca(2+).

Retina, in rod and cone outer segments, and pineal gland.

Stimulates retinal guanylyl cyclase when free calcium ions concentration is low and inhibits guanylyl cyclase when free calcium ions concentration is elevated. This Ca(2+)-sensitive regulation of retinal guanylyl cyclase is a key event in recovery of the dark state of rod photoreceptors following light exposure. This Gallus gallus (Chicken) protein is Guanylyl cyclase-activating protein 1 (GUCA1A).